Reading from the N-terminus, the 250-residue chain is Serine/arginine-rich splicing factor RS31A (250 aa).

2 RRM domains span residues 2–74 (RHVY…WAKD) and 95–166 (KTLF…YALR). The tract at residues 170–250 (EREDRYAGSR…SRSPIQRARG (81 aa)) is disordered. Residues 177 to 191 (GSRRRRSPSPVYRRR) show a composition bias toward basic residues. Phosphoserine occurs at positions 183, 185, 201, 218, and 243. Residues 192 to 230 (PSPDYTRRRSPEYDRYKGPAPYERRKSPDYGRRSSDYGR) are compositionally biased toward basic and acidic residues.

Belongs to the splicing factor SR family. RS subfamily. In terms of assembly, component of the spliceosome. Interacts with MOS14.

It localises to the nucleus speckle. The protein resides in the nucleus. The protein localises to the nucleoplasm. In terms of biological role, probably involved in intron recognition and spliceosome assembly. This is Serine/arginine-rich splicing factor RS31A (RS31A) from Arabidopsis thaliana (Mouse-ear cress).